An 85-amino-acid polypeptide reads, in one-letter code: Toxin BmKa1 (85 aa).

The first 19 residues, 1–19, serve as a signal peptide directing secretion; that stretch reads MNYLVFFSLALLLMTGVGS. An LCN-type CS-alpha/beta domain is found at 21-83; it reads RDGYIADDKN…VPIRVPGKCN (63 aa). Intrachain disulfides connect cysteine 31/cysteine 82, cysteine 35/cysteine 55, cysteine 41/cysteine 65, and cysteine 45/cysteine 67.

The protein belongs to the long (4 C-C) scorpion toxin superfamily. Sodium channel inhibitor family. Alpha subfamily. In terms of tissue distribution, expressed by the venom gland.

It is found in the secreted. In terms of biological role, alpha toxins bind voltage-independently at site-3 of sodium channels (Nav) and inhibit the inactivation of the activated channels, thereby blocking neuronal transmission. This is Toxin BmKa1 from Olivierus martensii (Manchurian scorpion).